The following is a 460-amino-acid chain: Protein king tubby (460 aa).

Disordered regions lie at residues 75-97 (NGSP…NNMR) and 115-208 (HELE…EGDV). Residues 85-97 (AMNTSRNHSNNMR) show a composition bias toward polar residues. Over residues 130–145 (QHQQSASHSANSTQSQ) the composition is skewed to low complexity. Ser-153 carries the phosphoserine modification. Residues 194 to 203 (NGTGNGTGGE) show a composition bias toward gly residues.

This sequence belongs to the TUB family. As to expression, detected in sensory neurons which have a ciliary structure such as the chordotonal neurons, Orco-expressing olfactory receptor neurons, labellar gustatory receptor neurons and in the femoral chordotonal organ (at protein level). In the chordotonal neurons of the Johnston's organ expressed in the proximal to distal cilia, with lower levels of expression in the distal portion (at protein level). Also detected in the salivary glands and antenna (at protein level). Expressed in photoreceptor cells (at protein level). At stage 9 expression is detected in a subset of neuroblasts. By stage 12 expression is found in both the CNS and PNS. In late-stage embryos, expression persists in the CNS and PNS with more abundant expression in the antennal-maxillary sensory neurons and in bilateral groups of cells in the brain.

The protein localises to the cytoplasm. The protein resides in the nucleus. It is found in the cell projection. It localises to the cilium membrane. Its subcellular location is the rhabdomere. Functions in regulating protein trafficking, retinal maintenance and lipid storage. Protects photoreceptor cells R1 to R6 against light-induced retinal degeneration by stimulating norpA-mediated endocytosis of the rhodopsin ninaE (Rh1). In the auditory receptor neurons, functions as a cilia trafficking regulator of various transient receptor potential (TRP) channel components including iav and nompC. Likely to deliver pre-ciliary vesicles containing membrane proteins such as iav and nompC to the intraflagellar transport complex (IFT) at the cilia base. Plays a role in the inhibition of fat storage. The sequence is that of Protein king tubby (ktub) from Drosophila melanogaster (Fruit fly).